Here is a 299-residue protein sequence, read N- to C-terminus: MKKNILNLALVGALSTSFLMAKPAHNANNATHNTKKTTDSSAGVLATVDGRPITKSDFDMIKQRNPNFDFDKLKEKEKEALIDQAIRTALVENEAKTEKLDSTPEFKAMMEAVKKQALVEFWAKKQAEEVKKVQIPEKEMQDFYNANKDQLFVKQEAHARHILVKTEDEAKRIISEIDKQPKAKKEAKFIELANRDTIDPNSKNAQNGGDLGKFQKNQMAPDFSKAAFALTPGDYTKTPVKTEFGYHIIYLISKDSPVTYTYEQAKPTIKGMLQEKLFQERMNQRIEELRKHAKIVINK.

Positions 1–21 (MKKNILNLALVGALSTSFLMA) are cleaved as a signal peptide. The PpiC domain maps to 154-253 (KQEAHARHIL…FGYHIIYLIS (100 aa)).

It carries out the reaction [protein]-peptidylproline (omega=180) = [protein]-peptidylproline (omega=0). The protein is Putative peptidyl-prolyl cis-trans isomerase HP_0175 of Helicobacter pylori (strain ATCC 700392 / 26695) (Campylobacter pylori).